The sequence spans 167 residues: uncharacterized protein (167 aa).

This is an uncharacterized protein from Escherichia coli (strain K12).